A 930-amino-acid chain; its full sequence is Alanine--tRNA ligase (930 aa).

Positions 595, 599, 700, and 704 each coordinate Zn(2+).

Belongs to the class-II aminoacyl-tRNA synthetase family. Zn(2+) serves as cofactor.

The protein localises to the cytoplasm. The enzyme catalyses tRNA(Ala) + L-alanine + ATP = L-alanyl-tRNA(Ala) + AMP + diphosphate. Its function is as follows. Catalyzes the attachment of alanine to tRNA(Ala) in a two-step reaction: alanine is first activated by ATP to form Ala-AMP and then transferred to the acceptor end of tRNA(Ala). Also edits incorrectly charged Ser-tRNA(Ala) and Gly-tRNA(Ala) via its editing domain. The chain is Alanine--tRNA ligase from Malacoplasma penetrans (strain HF-2) (Mycoplasma penetrans).